Consider the following 327-residue polypeptide: Glutaminase 1 (327 aa).

Substrate-binding residues include Ser-74, Asn-126, Glu-170, Asn-177, Tyr-201, Tyr-253, and Val-271.

It belongs to the glutaminase family. In terms of assembly, homotetramer.

It carries out the reaction L-glutamine + H2O = L-glutamate + NH4(+). The polypeptide is Glutaminase 1 (glsA1) (Bacillus subtilis (strain 168)).